The sequence spans 292 residues: ATP phosphoribosyltransferase (292 aa).

It belongs to the ATP phosphoribosyltransferase family. Long subfamily. Mg(2+) is required as a cofactor.

The protein resides in the cytoplasm. It carries out the reaction 1-(5-phospho-beta-D-ribosyl)-ATP + diphosphate = 5-phospho-alpha-D-ribose 1-diphosphate + ATP. It participates in amino-acid biosynthesis; L-histidine biosynthesis; L-histidine from 5-phospho-alpha-D-ribose 1-diphosphate: step 1/9. With respect to regulation, feedback inhibited by histidine. Functionally, catalyzes the condensation of ATP and 5-phosphoribose 1-diphosphate to form N'-(5'-phosphoribosyl)-ATP (PR-ATP). Has a crucial role in the pathway because the rate of histidine biosynthesis seems to be controlled primarily by regulation of HisG enzymatic activity. In Desulfatibacillum aliphaticivorans, this protein is ATP phosphoribosyltransferase.